Consider the following 203-residue polypeptide: Ponticulin-like protein H (203 aa).

A signal peptide spans 1-20 (MKLLNSLVLLAALCAITANG). Residue asparagine 58 is glycosylated (N-linked (GlcNAc...) asparagine). Low complexity predominate over residues 127 to 168 (SDSTNPTSTPSTTPSATPTVTPSTTPTVTPTVTPSTTPTVAP). The disordered stretch occupies residues 127 to 183 (SDSTNPTSTPSTTPSATPTVTPSTTPTVTPTVTPSTTPTVAPTVPPTTPPSTTTGSG). Serine 182 is lipidated: GPI-like-anchor amidated serine. A propeptide spans 183–203 (GSTVVASFGLIVSILLASLAL) (removed in mature form).

It belongs to the ponticulin family. In terms of processing, the GPI-like-anchor contains a phosphoceramide group, rather than a phosphatidyl group.

The protein localises to the cell membrane. In terms of biological role, binds F-actin and nucleates actin assembly. The polypeptide is Ponticulin-like protein H (ponH) (Dictyostelium discoideum (Social amoeba)).